We begin with the raw amino-acid sequence, 121 residues long: Large ribosomal subunit protein bL12 (121 aa).

Belongs to the bacterial ribosomal protein bL12 family. As to quaternary structure, homodimer. Part of the ribosomal stalk of the 50S ribosomal subunit. Forms a multimeric L10(L12)X complex, where L10 forms an elongated spine to which 2 to 4 L12 dimers bind in a sequential fashion. Binds GTP-bound translation factors.

Its function is as follows. Forms part of the ribosomal stalk which helps the ribosome interact with GTP-bound translation factors. Is thus essential for accurate translation. In Tolumonas auensis (strain DSM 9187 / NBRC 110442 / TA 4), this protein is Large ribosomal subunit protein bL12.